Consider the following 373-residue polypeptide: GTP cyclohydrolase 1 type 2 homolog (373 aa).

A divalent metal cation contacts are provided by H67, H68, D106, H333, and E336.

The protein belongs to the GTP cyclohydrolase I type 2/NIF3 family. In terms of assembly, homohexamer.

The protein is GTP cyclohydrolase 1 type 2 homolog of Listeria innocua serovar 6a (strain ATCC BAA-680 / CLIP 11262).